Here is a 611-residue protein sequence, read N- to C-terminus: Threonine--tRNA ligase (611 aa).

The catalytic stretch occupies residues 209–502; the sequence is DHRRLGKDLE…MTENYAGDFP (294 aa). Zn(2+) is bound by residues Cys302, His353, and His479.

It belongs to the class-II aminoacyl-tRNA synthetase family. As to quaternary structure, homodimer. Requires Zn(2+) as cofactor.

The protein localises to the cytoplasm. The enzyme catalyses tRNA(Thr) + L-threonine + ATP = L-threonyl-tRNA(Thr) + AMP + diphosphate + H(+). In terms of biological role, catalyzes the attachment of threonine to tRNA(Thr) in a two-step reaction: L-threonine is first activated by ATP to form Thr-AMP and then transferred to the acceptor end of tRNA(Thr). Also edits incorrectly charged L-seryl-tRNA(Thr). This is Threonine--tRNA ligase from Synechococcus sp. (strain CC9902).